Here is a 507-residue protein sequence, read N- to C-terminus: ATP synthase subunit alpha, chloroplastic (507 aa).

Position 170 to 177 (170 to 177 (GDRQTGKT)) interacts with ATP.

Belongs to the ATPase alpha/beta chains family. F-type ATPases have 2 components, CF(1) - the catalytic core - and CF(0) - the membrane proton channel. CF(1) has five subunits: alpha(3), beta(3), gamma(1), delta(1), epsilon(1). CF(0) has four main subunits: a, b, b' and c.

It localises to the plastid. The protein localises to the chloroplast thylakoid membrane. The enzyme catalyses ATP + H2O + 4 H(+)(in) = ADP + phosphate + 5 H(+)(out). Functionally, produces ATP from ADP in the presence of a proton gradient across the membrane. The alpha chain is a regulatory subunit. This chain is ATP synthase subunit alpha, chloroplastic, found in Physcomitrium patens (Spreading-leaved earth moss).